A 533-amino-acid polypeptide reads, in one-letter code: Basal body-orientation factor 1 (533 aa).

A disordered region spans residues 1–30 (MPAKDKRKDKRKDKRKGKNKGKEPKKIIKS). Over residues 7 to 19 (RKDKRKDKRKGKN) the composition is skewed to basic residues. Positions 20–30 (KGKEPKKIIKS) are enriched in basic and acidic residues. Coiled-coil stretches lie at residues 34 to 207 (AIER…EAEK) and 246 to 368 (LKEA…VEQF). An interaction with MNS1 and ODF2 region spans residues 277–533 (VKEKIMQLTQ…PQGLQDSDIA (257 aa)). A compositionally biased stretch (polar residues) spans 507-517 (QQAPVSDSNRM). A disordered region spans residues 507–533 (QQAPVSDSNRMVSPDVIPQGLQDSDIA).

Belongs to the BBOF1 family. As to quaternary structure, interacts with MNS1 and ODF2. In terms of tissue distribution, expressed exclusively in the testis and predominantly expressed in male germ cells.

Its subcellular location is the cytoplasm. The protein localises to the cytoskeleton. It localises to the cilium basal body. The protein resides in the flagellum axoneme. Its function is as follows. Plays an essential role in sperm motility and male fertility by stabilizing the sperm flagellar axonemal structure. May be required for the stability of ODF2 and MANS1 proteins. Dispensable for the assembly and function of motile cilia. The protein is Basal body-orientation factor 1 of Mus musculus (Mouse).